Here is a 266-residue protein sequence, read N- to C-terminus: Signal peptidase I (266 aa).

Topologically, residues 1-20 (MQTDNTKSNTNKTAKQEWGS) are cytoplasmic. Residues 21-41 (FVFVICIALLIRILIMEPFTV) traverse the membrane as a helical segment. Residues 42–266 (PTGSMKATIL…IFRNLYNTDV (225 aa)) are Periplasmic-facing. Catalysis depends on residues serine 45 and lysine 108.

This sequence belongs to the peptidase S26 family.

It is found in the cell inner membrane. It catalyses the reaction Cleavage of hydrophobic, N-terminal signal or leader sequences from secreted and periplasmic proteins.. The protein is Signal peptidase I (lepB) of Rickettsia massiliae (strain Mtu5).